Reading from the N-terminus, the 361-residue chain is S-adenosylmethionine:tRNA ribosyltransferase-isomerase (361 aa).

This sequence belongs to the QueA family. Monomer.

The protein resides in the cytoplasm. It catalyses the reaction 7-aminomethyl-7-carbaguanosine(34) in tRNA + S-adenosyl-L-methionine = epoxyqueuosine(34) in tRNA + adenine + L-methionine + 2 H(+). It functions in the pathway tRNA modification; tRNA-queuosine biosynthesis. In terms of biological role, transfers and isomerizes the ribose moiety from AdoMet to the 7-aminomethyl group of 7-deazaguanine (preQ1-tRNA) to give epoxyqueuosine (oQ-tRNA). The sequence is that of S-adenosylmethionine:tRNA ribosyltransferase-isomerase from Mesorhizobium japonicum (strain LMG 29417 / CECT 9101 / MAFF 303099) (Mesorhizobium loti (strain MAFF 303099)).